We begin with the raw amino-acid sequence, 360 residues long: MAAAISAAVSLPSSKSSSLLTKISSVSPQRIFLKKSTVCYRRVVSVKAQVTTDTTEAPPVKVVKESKKQEEGIVVNKFKPKNPYTGRCLLNTKITGDDAPGETWHIVFTTEGEVPYREGQSIGVIPEGIDKNGKPHKLRLYSIASSAIGDFGDSKTVSLCVKRLVYTNDGGEIVKGVCSNFLCDLKPGDEAKITGPVGKEMLMPKDPNATIIMLGTGTGIAPFRSFLWKMFFEEHEDYKFNGLAWLFLGVPTSSSLLYKEEFEKMKEKNPDNFRLDFAVSREQTNEKGEKMYIQTRMAEYAEELWELLKKDNTFVYMCGLKGMEKGIDDIMVSLAAKDGIDWLEYKKQLKRSEQWNVEVY.

A chloroplast-targeting transit peptide spans 1–49 (MAAAISAAVSLPSSKSSSLLTKISSVSPQRIFLKKSTVCYRRVVSVKAQ). One can recognise an FAD-binding FR-type domain in the interval 81-203 (KNPYTGRCLL…TGPVGKEMLM (123 aa)). Residues 139–142 (RLYS), 160–162 (CVK), tyrosine 166, and 177–179 (VCS) contribute to the FAD site. Positions 142 and 162 each coordinate NADP(+). Cysteine 178 and cysteine 183 are disulfide-bonded. Serine 179 is subject to Phosphoserine. A Phosphothreonine modification is found at threonine 210. Threonine 218 contacts FAD. Residues threonine 218, 250 to 251 (VP), 280 to 281 (SR), lysine 290, 319 to 320 (GL), and glutamate 358 each bind NADP(+).

The protein belongs to the ferredoxin--NADP reductase type 1 family. Heterodimer with LFNR2. Interacts with PGRL1A and PGRL1B. Interacts with TIC62. Component of high molecular weight thylakoid LFNRs-containing protein complexes containing LIR1, LFNR1, LFNR2, TIC62 and TROL proteins. Interacts directly with LIR1 and TIC62; LIR1 increases the affinity of LFNR1 and LFNR2 for TIC62. Binds to YCF54 in chloroplasts. Requires FAD as cofactor. May form interchain disulfide bonds with LIR1. In terms of tissue distribution, expressed in shoots. Restricted to green tissues, being more abundant in siliques.

The protein resides in the plastid. It localises to the chloroplast stroma. It is found in the chloroplast thylakoid membrane. The enzyme catalyses 2 reduced [2Fe-2S]-[ferredoxin] + NADP(+) + H(+) = 2 oxidized [2Fe-2S]-[ferredoxin] + NADPH. It functions in the pathway energy metabolism; photosynthesis. In terms of biological role, plays a key role in regulating the relative amounts of cyclic and non-cyclic electron flow to meet the demands of the plant for ATP and reducing power. Probable electron donor required for the MgProto monomethylester (MgProtoME) cyclase complex reaction to form protochlorophyllide, thus connecting chlorophyll synthesis with photosynthetic activity. The sequence is that of Ferredoxin--NADP reductase, leaf isozyme 1, chloroplastic from Arabidopsis thaliana (Mouse-ear cress).